We begin with the raw amino-acid sequence, 212 residues long: Probable nicotinate-nucleotide adenylyltransferase (212 aa).

The protein belongs to the NadD family.

The enzyme catalyses nicotinate beta-D-ribonucleotide + ATP + H(+) = deamido-NAD(+) + diphosphate. It participates in cofactor biosynthesis; NAD(+) biosynthesis; deamido-NAD(+) from nicotinate D-ribonucleotide: step 1/1. Catalyzes the reversible adenylation of nicotinate mononucleotide (NaMN) to nicotinic acid adenine dinucleotide (NaAD). The polypeptide is Probable nicotinate-nucleotide adenylyltransferase (Shewanella sp. (strain ANA-3)).